Reading from the N-terminus, the 688-residue chain is Polyribonucleotide nucleotidyltransferase (688 aa).

Positions 484 and 490 each coordinate Mg(2+). The KH domain maps to 550 to 609; sequence PQTEIFNVAPDKIIEIIGQGGRVIKEIVEKFEVKIDLNTPSGEVKIMGNKERVLKTKEFI. The region spanning 626–688 is the S1 motif domain; the sequence is DEVLEAQVKR…NKGKIALDLA (63 aa).

The protein belongs to the polyribonucleotide nucleotidyltransferase family. The cofactor is Mg(2+).

The protein localises to the cytoplasm. The catalysed reaction is RNA(n+1) + phosphate = RNA(n) + a ribonucleoside 5'-diphosphate. Functionally, involved in mRNA degradation. Catalyzes the phosphorolysis of single-stranded polyribonucleotides processively in the 3'- to 5'-direction. The chain is Polyribonucleotide nucleotidyltransferase from Helicobacter pylori (strain J99 / ATCC 700824) (Campylobacter pylori J99).